The sequence spans 587 residues: Monocopper oxidase-like protein SKU5 (587 aa).

A signal peptide spans 1–20 (MDLFKILLLVFFVNISFCFA). 2 N-linked (GlcNAc...) asparagine glycosylation sites follow: N14 and N58. H80 contributes to the Cu cation binding site. Residues N107, N169, N200, N257, N278, N293, N342, N362, N430, and N444 are each glycosylated (N-linked (GlcNAc...) asparagine). Residue H452 participates in Cu cation binding. An N-linked (GlcNAc...) asparagine glycan is attached at N534. S562 is lipidated: GPI-anchor amidated serine. Positions 563-587 (ASKSIGFTSLSMVVMALVMMMMLQH) are cleaved as a propeptide — removed in mature form.

This sequence belongs to the multicopper oxidase family. It depends on Cu cation as a cofactor. As to expression, expressed in roots, hypocotyls, cotyledons, leaves, stems and flowers.

It localises to the secreted. The protein localises to the cell wall. The protein resides in the cell membrane. In terms of biological role, may be a monocopper oxidase of unknown specificity. Involved in directional growth processes, possibly by participating in cell wall expansion. The protein is Monocopper oxidase-like protein SKU5 (SKU5) of Arabidopsis thaliana (Mouse-ear cress).